Consider the following 287-residue polypeptide: MASLKSIKKRIVSVKNTGQITKAMKMVSAAKLRRAQENVVAARPYAAKLGEVLGRLSRNQDADSSPLMIKRTTGKALLIVVTSDRGLCGGFNANLCKAAERFVKERGAEFTDLSIMTIGRKGYEFLKNRQKIRKNFGTVFSNLNYQTAALLAQEVIQGYLDEEFDEVFIIYNAFRSVMSQDITLEQLLPVTPPEAADEEYAPEYIYEPSKSELLGELLPKHIEVQIFKSLLESVASEHGARMTAMDSASKNANEMIGKLTLQYNRARQAAITTELMEIISGAESIKG.

It belongs to the ATPase gamma chain family. In terms of assembly, F-type ATPases have 2 components, CF(1) - the catalytic core - and CF(0) - the membrane proton channel. CF(1) has five subunits: alpha(3), beta(3), gamma(1), delta(1), epsilon(1). CF(0) has three main subunits: a, b and c.

The protein localises to the cell inner membrane. Produces ATP from ADP in the presence of a proton gradient across the membrane. The gamma chain is believed to be important in regulating ATPase activity and the flow of protons through the CF(0) complex. The chain is ATP synthase gamma chain from Geotalea daltonii (strain DSM 22248 / JCM 15807 / FRC-32) (Geobacter daltonii).